The following is a 1433-amino-acid chain: DNA-directed RNA polymerase subunit beta' (1433 aa).

C66, C68, C81, and C84 together coordinate Zn(2+). D474, D476, and D478 together coordinate Mg(2+). Zn(2+)-binding residues include C823, C897, C904, and C907.

Belongs to the RNA polymerase beta' chain family. In terms of assembly, the RNAP catalytic core consists of 2 alpha, 1 beta, 1 beta' and 1 omega subunit. When a sigma factor is associated with the core the holoenzyme is formed, which can initiate transcription. Mg(2+) serves as cofactor. The cofactor is Zn(2+).

It catalyses the reaction RNA(n) + a ribonucleoside 5'-triphosphate = RNA(n+1) + diphosphate. In terms of biological role, DNA-dependent RNA polymerase catalyzes the transcription of DNA into RNA using the four ribonucleoside triphosphates as substrates. This Amoebophilus asiaticus (strain 5a2) protein is DNA-directed RNA polymerase subunit beta'.